The chain runs to 709 residues: Fatty acid oxidation complex subunit alpha (709 aa).

The interval 1–188 (MEKTFNLTRR…KMGLVNDVVP (188 aa)) is enoyl-CoA hydratase. The tract at residues 308–709 (RKVKKAVILG…EMAAEKTRFF (402 aa)) is 3-hydroxyacyl-CoA dehydrogenase.

It in the N-terminal section; belongs to the enoyl-CoA hydratase/isomerase family. In the central section; belongs to the 3-hydroxyacyl-CoA dehydrogenase family. Heterotetramer of two alpha chains (FadJ) and two beta chains (FadI).

The protein resides in the cytoplasm. It catalyses the reaction a (3S)-3-hydroxyacyl-CoA = a (2E)-enoyl-CoA + H2O. The catalysed reaction is a 4-saturated-(3S)-3-hydroxyacyl-CoA = a (3E)-enoyl-CoA + H2O. The enzyme catalyses a (3S)-3-hydroxyacyl-CoA + NAD(+) = a 3-oxoacyl-CoA + NADH + H(+). It carries out the reaction (3S)-3-hydroxybutanoyl-CoA = (3R)-3-hydroxybutanoyl-CoA. It functions in the pathway lipid metabolism; fatty acid beta-oxidation. Its function is as follows. Catalyzes the formation of a hydroxyacyl-CoA by addition of water on enoyl-CoA. Also exhibits 3-hydroxyacyl-CoA epimerase and 3-hydroxyacyl-CoA dehydrogenase activities. The polypeptide is Fatty acid oxidation complex subunit alpha (Shewanella sp. (strain MR-4)).